The chain runs to 146 residues: Protein SprT-like (146 aa).

The SprT-like domain occupies 6 to 141; it reads YVKTVSIEDF…GCGLCQGKLI (136 aa). His-64 is a Zn(2+) binding site. Residue Glu-65 is part of the active site. His-68 contacts Zn(2+).

This sequence belongs to the SprT family. It depends on Zn(2+) as a cofactor.

It is found in the cytoplasm. This Streptococcus thermophilus (strain CNRZ 1066) protein is Protein SprT-like.